The following is a 2221-amino-acid chain: Voltage-dependent L-type calcium channel subunit alpha-1C (2221 aa).

The tract at residues 1-20 is disordered; sequence MVNENTRMYIPEENHQGSNY. The Cytoplasmic segment spans residues 1–124; that stretch reads MVNENTRMYI…RACISIVEWK (124 aa). Residues 47–68 are calmodulin-binding; it reads GAALSWQAAIDAARQAKLMGSA. Residues 73–98 are disordered; that stretch reads ISTVSSTQRKRQQYGKPKKQGSTTAT. Over residues 80–91 the composition is skewed to basic residues; it reads QRKRQQYGKPKK. An I repeat occupies 111–408; sequence NPIRRACISI…LVLGVLSGEF (298 aa). A helical transmembrane segment spans residues 125–143; sequence PFEIIILLTIFANCVALAI. The Extracellular portion of the chain corresponds to 144-158; the sequence is YIPFPEDDSNATNSN. Asn153 is a glycosylation site (N-linked (GlcNAc...) asparagine). The chain crosses the membrane as a helical span at residues 159–179; it reads LERVEYLFLIIFTVEAFLKVI. The Cytoplasmic portion of the chain corresponds to 180–188; the sequence is AYGLLFHPN. The chain crosses the membrane as a helical span at residues 189–209; that stretch reads AYLRNGWNLLDFIIVVVGLFS. Topologically, residues 210–232 are extracellular; it reads AILEQATKADGANALGGKGAGFD. A helical membrane pass occupies residues 233–251; the sequence is VKALRAFRVLRPLRLVSGV. Topologically, residues 252-268 are cytoplasmic; the sequence is PSLQVVLNSIIKAMVPL. Residues 269 to 290 form a helical membrane-spanning segment; sequence LHIALLVLFVIIIYAIIGLELF. The Extracellular portion of the chain corresponds to 291-350; that stretch reads MGKMHKTCYNQEGIADVPAEDDPSPCALETGHGRQCQNGTVCKPGWDGPKHGITNFDNFA. 2 disulfides stabilise this stretch: Cys298-Cys326 and Cys316-Cys332. Asn328 is a glycosylation site (N-linked (GlcNAc...) asparagine). The pore-forming intramembrane region spans 351 to 372; that stretch reads FAMLTVFQCITMEGWTDVLYWV. A Selectivity filter of repeat I motif is present at residues 361–364; sequence TMEG. Ca(2+) is bound at residue Glu363. Residues 373-380 lie on the Extracellular side of the membrane; the sequence is NDAVGRDW. The helical transmembrane segment at 381 to 401 threads the bilayer; it reads PWIYFVTLIIIGSFFVLNLVL. The Cytoplasmic segment spans residues 402–524; sequence GVLSGEFSKE…RKCRAAVKSN (123 aa). The tract at residues 428–445 is AID/alpha-interaction domain; mediates interaction with the beta subunit; the sequence is QQLEEDLKGYLDWITQAE. The tract at residues 449-481 is disordered; sequence PENEDEGMDEEKPRNMSMPTSETESVNTENVAG. Over residues 465-478 the composition is skewed to polar residues; sequence SMPTSETESVNTEN. The residue at position 469 (Ser469) is a Phosphoserine. At Thr476 the chain carries Phosphothreonine. Residues 510–756 form an II repeat; it reads NRFCRRKCRA…VFLAIAVDNL (247 aa). Residues 525–543 traverse the membrane as a helical segment; it reads VFYWLVIFLVFLNTLTIAS. Residues 544–554 lie on the Extracellular side of the membrane; that stretch reads EHYNQPNWLTE. A helical transmembrane segment spans residues 555 to 575; sequence VQDTANKALLALFTAEMLLKM. At 576-586 the chain is on the cytoplasmic side; sequence YSLGLQAYFVS. A helical transmembrane segment spans residues 587-606; sequence LFNRFDCFVVCGGILETILV. At 607–615 the chain is on the extracellular side; the sequence is ETKIMSPLG. Residues 616–634 traverse the membrane as a helical segment; sequence ISVLRCVRLLRIFKITRYW. Over 635–653 the chain is Cytoplasmic; it reads NSLSNLVASLLNSVRSIAS. Residues 654-673 form a helical membrane-spanning segment; the sequence is LLLLLFLFIIIFSLLGMQLF. Topologically, residues 674 to 693 are extracellular; that stretch reads GGKFNFDEMQTRRSTFDNFP. The segment at residues 694–715 is an intramembrane region (pore-forming); sequence QSLLTVFQILTGEDWNSVMYDG. The short motif at 704 to 707 is the Selectivity filter of repeat II element; sequence TGED. Glu706 provides a ligand contact to Ca(2+). Residues 716-725 are Extracellular-facing; the sequence is IMAYGGPSFP. Residues 726-745 form a helical membrane-spanning segment; that stretch reads GMLVCIYFIILFICGNYILL. Residues 746–900 lie on the Cytoplasmic side of the membrane; it reads NVFLAIAVDN…LQCHRIVNDT (155 aa). The interval 764-861 is disordered; the sequence is SAQKEEEEEK…EMPVGPRPRP (98 aa). Positions 783–792 are enriched in basic and acidic residues; sequence SPEKKQELVE. 2 positions are modified to phosphoserine: Ser808 and Ser815. The segment at 829-876 is interaction with STAC2; it reads NENEDKSPYPNPETTGEEDEEEPEMPVGPRPRPLSELHLKEKAVPMPE. Over residues 843–852 the composition is skewed to acidic residues; sequence TGEEDEEEPE. The stretch at 887-1189 is one III repeat; it reads NRFRLQCHRI…IFVGFVIVTF (303 aa). Residues 901–919 traverse the membrane as a helical segment; the sequence is IFTNLILFFILLSSISLAA. Over 920 to 931 the chain is Extracellular; it reads EDPVQHTSFRNH. A helical membrane pass occupies residues 932–952; it reads ILFYFDIVFTTIFTIEIALKI. The Cytoplasmic segment spans residues 953–987; that stretch reads LGNADYVFTSIFTLEIILKMTAYGAFLHKGSFCRN. Residues 988 to 1006 form a helical membrane-spanning segment; the sequence is YFNILDLLVVSVSLISFGI. Residues 1007 to 1013 are Extracellular-facing; sequence QSSAINV. Residues 1014-1032 traverse the membrane as a helical segment; the sequence is VKILRVLRVLRPLRAINRA. The Cytoplasmic portion of the chain corresponds to 1033 to 1051; sequence KGLKHVVQCVFVAIRTIGN. Residues 1052-1071 form a helical membrane-spanning segment; it reads IVIVTTLLQFMFACIGVQLF. Residues 1072–1121 lie on the Extracellular side of the membrane; the sequence is KGKLYTCSDSSKQTEAECKGNYITYKDGEVDHPIIQPRSWENSKFDFDNV. A disulfide bridge connects residues Cys1078 and Cys1089. Residues 1109–1198 form a dihydropyridine binding region; sequence RSWENSKFDF…FQEQGEQEYK (90 aa). An intramembrane region (pore-forming) is located at residues 1122-1142; that stretch reads LAAMMALFTVSTFEGWPELLY. The Selectivity filter of repeat III signature appears at 1133–1136; the sequence is TFEG. Residue Glu1135 participates in Ca(2+) binding. Topologically, residues 1143–1159 are extracellular; sequence RSIDSHTEDKGPIYNYR. Residues 1160–1181 form a helical membrane-spanning segment; that stretch reads VEISIFFIIYIIIIAFFMMNIF. The Cytoplasmic portion of the chain corresponds to 1182–1239; it reads VGFVIVTFQEQGEQEYKNCELDKNQRQCVEYALKARPLRRYIPKNQHQYKVWYVVNST. One copy of the IV repeat lies at 1226 to 1527; sequence NQHQYKVWYV…LFVAVIMDNF (302 aa). Residues 1240 to 1261 traverse the membrane as a helical segment; sequence YFEYLMFVLILLNTICLAMQHY. Residues 1262–1269 lie on the Extracellular side of the membrane; the sequence is GQSCLFKI. A helical membrane pass occupies residues 1270–1291; that stretch reads AMNILNMLFTGLFTVEMILKLI. The Cytoplasmic segment spans residues 1292–1301; sequence AFKPKGYFSD. A helical transmembrane segment spans residues 1302-1321; that stretch reads PWNVFDFLIVIGSIIDVILS. Over 1322–1372 the chain is Extracellular; the sequence is ETNHYFCDAWNTFDALIVVGSIVDIAITEVNPAEHTQCSPSMNAEENSRIS. The helical transmembrane segment at 1373 to 1391 threads the bilayer; that stretch reads ITFFRLFRVMRLVKLLSRG. The Cytoplasmic portion of the chain corresponds to 1392–1409; it reads EGIRTLLWTFIKSFQALP. The chain crosses the membrane as a helical span at residues 1410–1430; that stretch reads YVALLIVMLFFIYAVIGMQVF. At 1431 to 1452 the chain is on the extracellular side; it reads GKIALNDTTEINRNNNFQTFPQ. An N-linked (GlcNAc...) asparagine glycan is attached at Asn1436. The segment at residues 1453-1471 is an intramembrane region (pore-forming); it reads AVLLLFRCATGEAWQDIML. The Selectivity filter of repeat IV motif lies at 1462–1465; it reads TGEA. Over 1472–1499 the chain is Extracellular; that stretch reads ACMPGKKCAPESEPSNSTEGETPCGSSF. Residues 1478-1546 form a dihydropyridine binding region; that stretch reads KCAPESEPSN…LGPHHLDEFK (69 aa). Residues Cys1479 and Cys1495 are joined by a disulfide bond. A glycan (N-linked (GlcNAc...) asparagine) is linked at Asn1487. The segment at 1492 to 1534 is phenylalkylamine binding; it reads ETPCGSSFAVFYFISFYMLCAFLIINLFVAVIMDNFDYLTRDW. Residues 1500–1524 traverse the membrane as a helical segment; the sequence is AVFYFISFYMLCAFLIINLFVAVIM. Topologically, residues 1525–2221 are cytoplasmic; that stretch reads DNFDYLTRDW…QDSRVYVSSL (697 aa). The important for interaction with STAC1, STAC2 and STAC3 stretch occupies residues 1659–1686; the sequence is DEVTVGKFYATFLIQEYFRKFKKRKEQG. The calmodulin-binding IQ region stretch occupies residues 1665 to 1685; the sequence is KFYATFLIQEYFRKFKKRKEQ. The interval 1699–1718 is important for localization in at the junctional membrane; the sequence is LQAGLRTLHDIGPEIRRAIS. Residues Ser1718 and Ser1739 each carry the phosphoserine modification. Residues 1778 to 1847 form a disordered region; that stretch reads INKAGSSQGD…TVEGHGPPLS (70 aa). Polar residues predominate over residues 1799–1811; sequence STFTPSSYSSTGS. The segment covering 1812-1822 has biased composition (low complexity); sequence NANINNANNTA. At Ser1981 the chain carries Phosphoserine; by PKA. 2 disordered regions span residues 2029–2063 and 2186–2221; these read ASFP…VESS and AGQD…VSSL.

The protein belongs to the calcium channel alpha-1 subunit (TC 1.A.1.11) family. CACNA1C subfamily. Component of a calcium channel complex consisting of a pore-forming alpha subunit (CACNA1C) and ancillary beta, gamma and delta subunits. The channel complex contains alpha, beta, gamma and delta subunits in a 1:1:1:1 ratio, i.e. it contains only one of each type of subunit. CACNA1C channel activity is modulated by ancillary subunits, such as CACNB1, CACNB2, CACNB3, CACNA2D1 and CACNA2D4. Interacts with the gamma subunits CACNG4, CACNG6, CACNG7 and CACNG8. Interacts with CACNB1. Interacts with CACNB2. Identified in a complex with CACNA2D4 and CACNB3. Interacts with CACNB3. Interacts with CACNA2D1. Interacts with CACNA2D4. Interacts with CALM1. Interacts (via the N-terminus and the C-terminal C and IQ motifs) with CABP1; this inhibits Ca(2+)-dependent channel inactivation. The binding via the C motif is calcium independent whereas the binding via IQ requires the presence of calcium and is mutually exclusive with calmodulin binding. The binding to the cytoplasmic N-terminal domain is calcium independent but is essential for the channel modulation. Interacts (via C-terminal CDB motif) with CABP5; in a calcium-dependent manner. Interacts with CIB1; the interaction increases upon cardiomyocytes hypertrophy. Interacts with STAC2 and STAC3; this inhibits channel inactivation. As to quaternary structure, (Microbial infection) Interacts with influenzavirus H1 hemagglutinin. Post-translationally, phosphorylation by PKA at Ser-1981 activates the channel. Elevated levels of blood glucose lead to increased phosphorylation by PKA. In terms of tissue distribution, detected throughout the brain, including hippocampus, cerebellum and amygdala, throughout the heart and vascular system, including ductus arteriosus, in urinary bladder, and in retina and sclera in the eye. Expressed in brain, heart, jejunum, ovary, pancreatic beta-cells and vascular smooth muscle. Overall expression is reduced in atherosclerotic vascular smooth muscle.

It is found in the cell membrane. The protein localises to the sarcolemma. The protein resides in the perikaryon. It localises to the postsynaptic density membrane. Its subcellular location is the cell projection. It is found in the dendrite. The protein localises to the T-tubule. It carries out the reaction Ca(2+)(in) = Ca(2+)(out). With respect to regulation, inhibited by dihydropyridines (DHP), such as isradipine. Inhibited by nifedipine. Channel activity is regulated by Ca(2+) and calmodulin. Binding of STAC1, STAC2 or STAC3 to a region that overlaps with the calmodulin binding site inhibits channel inactivation by Ca(2+) and calmodulin. Binding of calmodulin or CABP1 at the same regulatory sites results in opposite effects on the channel function. Shear stress and pressure increases calcium channel activity. Functionally, pore-forming, alpha-1C subunit of the voltage-gated calcium channel that gives rise to L-type calcium currents. Mediates influx of calcium ions into the cytoplasm, and thereby triggers calcium release from the sarcoplasm. Plays an important role in excitation-contraction coupling in the heart. Required for normal heart development and normal regulation of heart rhythm. Required for normal contraction of smooth muscle cells in blood vessels and in the intestine. Essential for normal blood pressure regulation via its role in the contraction of arterial smooth muscle cells. Long-lasting (L-type) calcium channels belong to the 'high-voltage activated' (HVA) group. Pore-forming, alpha-1C subunit of the voltage-gated calcium channel that gives rise to L-type calcium currents. In terms of biological role, (Microbial infection) Acts as a receptor for Influenzavirus. May play a critical role in allowing virus entry when sialylated and expressed on lung tissues. The sequence is that of Voltage-dependent L-type calcium channel subunit alpha-1C (CACNA1C) from Homo sapiens (Human).